We begin with the raw amino-acid sequence, 327 residues long: Arabinose 5-phosphate isomerase KpsF (327 aa).

Positions 48–191 (VLNLIMNCKG…AIAMIHQRKF (144 aa)) constitute an SIS domain. 63–68 (GMGKSG) contributes to the ATP binding site. Residues 82–83 (GT), His-89, His-95, 121–130 (KLVPSLKNFG), and 155–157 (HMA) contribute to the substrate site. His-89 is a binding site for Zn(2+). 2 CBS domains span residues 217 to 273 (MQHD…EGSL) and 282 to 327 (MTRE…RIFD).

Homotetramer.

The enzyme catalyses D-arabinose 5-phosphate = D-ribulose 5-phosphate. Its activity is regulated as follows. Inhibited by 10 uM zinc, cadmium or mercury ions. Its function is as follows. Involved in the biosynthesis of K-antigen capsules. Catalyzes the reversible aldol-ketol isomerization between D-ribulose 5-phosphate (Ru5P) and D-arabinose 5-phosphate (A5P). The protein is Arabinose 5-phosphate isomerase KpsF of Escherichia coli O6:H1 (strain CFT073 / ATCC 700928 / UPEC).